Here is a 432-residue protein sequence, read N- to C-terminus: Gamma-glutamyl phosphate reductase (432 aa).

This sequence belongs to the gamma-glutamyl phosphate reductase family.

Its subcellular location is the cytoplasm. It catalyses the reaction L-glutamate 5-semialdehyde + phosphate + NADP(+) = L-glutamyl 5-phosphate + NADPH + H(+). It functions in the pathway amino-acid biosynthesis; L-proline biosynthesis; L-glutamate 5-semialdehyde from L-glutamate: step 2/2. Its function is as follows. Catalyzes the NADPH-dependent reduction of L-glutamate 5-phosphate into L-glutamate 5-semialdehyde and phosphate. The product spontaneously undergoes cyclization to form 1-pyrroline-5-carboxylate. In Corynebacterium glutamicum (strain R), this protein is Gamma-glutamyl phosphate reductase.